We begin with the raw amino-acid sequence, 468 residues long: Glucose-dependent insulinotropic receptor (468 aa).

At Met-1–Ser-6 the chain is on the extracellular side. A helical membrane pass occupies residues Phe-7–Val-27. Residues Ala-28–Asp-37 lie on the Cytoplasmic side of the membrane. A helical transmembrane segment spans residues Gly-38–Ile-58. The Extracellular segment spans residues Ser-59–Arg-81. A helical transmembrane segment spans residues Met-82 to Asp-102. Residues Arg-103–Cys-125 are Cytoplasmic-facing. The chain crosses the membrane as a helical span at residues Ile-126 to Phe-146. Residues Gln-147–Arg-164 are Extracellular-facing. Residues Phe-165–Tyr-185 form a helical membrane-spanning segment. Residues Cys-186–Thr-226 are Cytoplasmic-facing. The helical transmembrane segment at Val-227–Val-247 threads the bilayer. Residues Gln-248–Lys-262 lie on the Extracellular side of the membrane. A helical transmembrane segment spans residues Tyr-263–Gln-283. Residues Arg-284–Gly-468 lie on the Cytoplasmic side of the membrane.

This sequence belongs to the G-protein coupled receptor 1 family. As to expression, expression restricted to the beta-cells of pancreatic islets.

It localises to the cell membrane. Receptor for the endogenous fatty-acid ethanolamide oleoylethanolamide (OEA) and lysophosphatidylcholine (LPC). Functions as a glucose-dependent insulinotropic receptor. The activity of this receptor is mediated by G proteins which activate adenylate cyclase. Seems to act through a G(s) mediated pathway. This Rattus norvegicus (Rat) protein is Glucose-dependent insulinotropic receptor (Gpr119).